A 61-amino-acid polypeptide reads, in one-letter code: UPF0434 protein TM1040_0056 (61 aa).

This sequence belongs to the UPF0434 family.

This Ruegeria sp. (strain TM1040) (Silicibacter sp.) protein is UPF0434 protein TM1040_0056.